The following is a 139-amino-acid chain: MKILFVCTGNTCRSPLAESIAKEVMPNHQFESRGIFAVNNQGVSNYVEDLVEEHHLAETTLSQQFTEADLKADIILTMSYSHKELIEAHFGLQNHVFTLHEYVKEAGEVIDPYGGTKEMYVHTYEELVSLILKLKDIIC.

Cysteine 7 functions as the Nucleophile in the catalytic mechanism. Residue arginine 13 is part of the active site. The Proton donor role is filled by aspartate 111.

It belongs to the low molecular weight phosphotyrosine protein phosphatase family.

It catalyses the reaction O-phospho-L-tyrosyl-[protein] + H2O = L-tyrosyl-[protein] + phosphate. Inhibited by N-ethylmaleimide and sodium orthovanadate. Its function is as follows. Dephosphorylates the phosphotyrosine-containing proteins. The polypeptide is Low molecular weight protein-tyrosine-phosphatase PtpB (ptpB) (Staphylococcus aureus).